Consider the following 290-residue polypeptide: Homeobox protein HMX3-B (290 aa).

2 disordered regions span residues 1–41 (MADS…GSSK) and 96–169 (EKVN…KKKT). A compositionally biased stretch (basic and acidic residues) spans 107 to 124 (LDRHTPDPPKSDQESKEE). Residues 125-137 (SADDEIALEESDA) are compositionally biased toward acidic residues. Positions 138-162 (EEPKKETDQEDDWMRKGEDLESDKK) are enriched in basic and acidic residues. Residues 166–225 (KKKTRTVFSRSQVFQLESTFDIKRYLSSSERAGLAASLHLTETQVKIWFQNRRNKWKRQL) constitute a DNA-binding region (homeobox).

This sequence belongs to the HMX homeobox family. Expressed in the ear placode and vesicle and in cells forming the vestibulo-acoustic ganglion.

The protein localises to the nucleus. Its function is as follows. Transcription factor involved in specification of neuronal cell types and which is required for inner ear and hypothalamus development. Binds to the 5'-CAAGTG-3' core sequence. This Oryzias latipes (Japanese rice fish) protein is Homeobox protein HMX3-B (hmx3b).